The following is a 358-amino-acid chain: Type II restriction enzyme HpaII (358 aa).

Homodimer.

It carries out the reaction Endonucleolytic cleavage of DNA to give specific double-stranded fragments with terminal 5'-phosphates.. Functionally, an E and P subtype restriction enzyme that recognizes the double-stranded sequence 5'-CCGG-3' and cleaves after C-1. This Haemophilus parainfluenzae protein is Type II restriction enzyme HpaII.